We begin with the raw amino-acid sequence, 547 residues long: Smu-2 suppressor of mec-8 and unc-52 protein (547 aa).

Disordered stretches follow at residues 18 to 125, 164 to 202, 288 to 459, 496 to 515, and 524 to 547; these read TSAR…AQDQ, IDKS…AQEL, AEPK…AGPK, NGEG…AKRL, and KIMD…KPKY. Basic and acidic residues predominate over residues 34 to 44; that stretch reads ADPKTGDDKPA. A compositionally biased stretch (basic residues) spans 45–58; that stretch reads SFKHKHLKPAKFKK. A coiled-coil region spans residues 66–94; it reads KAKKEKTEADEDEAALKNILKNYRDRAAE. Positions 87-106 are enriched in basic and acidic residues; it reads NYRDRAAERRKQGDEKEDPS. The segment at 163 to 223 is required and sufficient for interaction with smu-1; the sequence is EIDKSDDDDD…SLHRVLFKNE (61 aa). Over residues 166–178 the composition is skewed to acidic residues; it reads KSDDDDDDDIDTA. 2 stretches are compositionally biased toward low complexity: residues 185–196 and 307–317; these read SSSSSSKPSEAS and APGAAAAAPGA. Over residues 330–423 the composition is skewed to basic and acidic residues; the sequence is VPSRKSRDSR…EREKKRKELE (94 aa). Tandem repeats lie at residues 336–337, 339–340, 348–349, 350–351, 352–353, 354–355, 356–357, 358–359, 360–361, 362–363, 364–365, and 367–368. The tract at residues 336-368 is 12 X 2 AA repeats of R-[DS]; sequence RDSRDAGRRGSRRDRSRDRSRDRDRDRDRDNRD. Positions 371 to 427 form a coiled coil; it reads FEKSANSRREEEQNRREQQRERERAEQERRREREKEREQEKAKEREKKRKELEESSG.

It belongs to the RED family. As to quaternary structure, probable component of the spliceosome. Heterotetramer with smu-1. The smu-1 homodimer interacts (via the N-terminal region including the LisH and CTLH domains) with smu-2, giving rise to a heterotetramer. As to expression, ubiquitous.

Its subcellular location is the nucleus. In terms of biological role, auxiliary spliceosomal protein that regulates selection of alternative splice sites in a small set of target pre-mRNA species. Selectively regulates alternative splicing of unc-52 exon 17. Thus, smu-2 mutants selectively suppress the effects of unc-52 nonsense mutations in exon 17 by promoting the accumulation of unc-52 isoforms that lack exon 17. In contrast, smu-2 mutants do not suppress the effects of an unc-52 mutation that affects the 5' splice site of exon 16. Required for normal accumulation of smu-1. In Caenorhabditis elegans, this protein is Smu-2 suppressor of mec-8 and unc-52 protein.